Here is a 515-residue protein sequence, read N- to C-terminus: 2-isopropylmalate synthase (515 aa).

Residues V5 to V268 form the Pyruvate carboxyltransferase domain. Mn(2+) contacts are provided by D14, H202, H204, and N239. Residues H394–P515 form a regulatory domain region.

It belongs to the alpha-IPM synthase/homocitrate synthase family. LeuA type 1 subfamily. Homodimer. Mn(2+) is required as a cofactor.

It is found in the cytoplasm. The enzyme catalyses 3-methyl-2-oxobutanoate + acetyl-CoA + H2O = (2S)-2-isopropylmalate + CoA + H(+). It participates in amino-acid biosynthesis; L-leucine biosynthesis; L-leucine from 3-methyl-2-oxobutanoate: step 1/4. In terms of biological role, catalyzes the condensation of the acetyl group of acetyl-CoA with 3-methyl-2-oxobutanoate (2-ketoisovalerate) to form 3-carboxy-3-hydroxy-4-methylpentanoate (2-isopropylmalate). This is 2-isopropylmalate synthase from Polynucleobacter asymbioticus (strain DSM 18221 / CIP 109841 / QLW-P1DMWA-1) (Polynucleobacter necessarius subsp. asymbioticus).